Consider the following 188-residue polypeptide: Elongation factor P (188 aa).

Residue Lys-34 is modified to N6-(3,6-diaminohexanoyl)-5-hydroxylysine.

Belongs to the elongation factor P family. Post-translationally, may be beta-lysylated on the epsilon-amino group of Lys-34 by the combined action of EpmA and EpmB, and then hydroxylated on the C5 position of the same residue by EpmC (if this protein is present). Lysylation is critical for the stimulatory effect of EF-P on peptide-bond formation. The lysylation moiety may extend toward the peptidyltransferase center and stabilize the terminal 3-CCA end of the tRNA. Hydroxylation of the C5 position on Lys-34 may allow additional potential stabilizing hydrogen-bond interactions with the P-tRNA.

The protein localises to the cytoplasm. It participates in protein biosynthesis; polypeptide chain elongation. In terms of biological role, involved in peptide bond synthesis. Alleviates ribosome stalling that occurs when 3 or more consecutive Pro residues or the sequence PPG is present in a protein, possibly by augmenting the peptidyl transferase activity of the ribosome. Modification of Lys-34 is required for alleviation. This chain is Elongation factor P, found in Erwinia tasmaniensis (strain DSM 17950 / CFBP 7177 / CIP 109463 / NCPPB 4357 / Et1/99).